A 236-amino-acid polypeptide reads, in one-letter code: Lipoarabinomannan carrier protein LprG (236 aa).

An N-terminal signal peptide occupies residues 1–26; the sequence is MRTPRRHCRRIAVLAAVSIAATVVAG. Residue Cys27 is the site of N-palmitoyl cysteine attachment. Cys27 is lipidated: S-diacylglycerol cysteine.

This sequence belongs to the LppX/LprAFG lipoprotein family. Post-translationally, modified by Lgt on Cys-27 with an S-linked diacylglyceral, signal peptide is removed by LspA, Cys-27 is further modifed with a fatty acid on its amino group by Lnt yielding a triacylated protein.

The protein resides in the cell inner membrane. It localises to the secreted. It is found in the cell wall. Its function is as follows. Helps membrane protein Mb1445c (P55) transport triacylglycerides (TAG) across the inner cell membrane into the periplasm and probably ultimately to the outer membrane. Binds TAG in its hydrophobic cavity and transfers it between lipid bilayers. TAG probably regulates lipid metabolism and growth regulation and plays a structural role in the outer membrane. Binds di- and triacylated phosphatidyl-myo-inositol mannosides (PIMs), and glycolipid lipoglycan modulins lipoarabinomannan (LAM) and lipomannan (LM), facilitating their recognition by TLR2. Required for activity of drug efflux transporter Mb1445c. Required, probably with Mb1445c, for normal surface localization of LAM. Constitutes a host TLR2 agonist (toll-like receptor). The chain is Lipoarabinomannan carrier protein LprG from Mycobacterium bovis (strain ATCC BAA-935 / AF2122/97).